The chain runs to 55 residues: UPF0434 protein BPEN_388 (55 aa).

It belongs to the UPF0434 family.

The polypeptide is UPF0434 protein BPEN_388 (Blochmanniella pennsylvanica (strain BPEN)).